Reading from the N-terminus, the 489-residue chain is MAEEKSTLGKIFTDWQVLIVLVLVILSVLSIYAIPPALDKGISGNLQLGLDLVGGSWIQLSFKSEVIGYESDMSQSDFITQLSEKLDADVIPVTSSSVEIREYYTKEELESVLAGMGAKLVTYEQGISKETADTVKGILEDKVNTLGTKDVQINTLTGANDVTKYVRVELAGTDINTAQEIVSSQGKFEIRIVTSGNETERVLSGDAVTSVSTPSQRNNYWGVGFTLSAEGAEALRDACIQYGAVTDPDSHNLVMLLDGEQVYSAPLSSDLAAKLSKGPVNDLSASTGYGEEGYNDAEVLEIHLRAGALPVDVEIAGSSSVTAERGEFIQIVCIAAAILGLLAVAFMVYYRYREPSIVVPMILVNLSEIIILLGIARYIQQLDLASIAGLIAVIGTGIDQLVVITDEVLHEGRVPSPSLYLKRFKRALGIITVSASTTIFAMLPLALMDLSTLKGFAIITILGVLIGVIFTRPAYGKIIMAILSKKPAK.

Transmembrane regions (helical) follow at residues Val-17–Ala-37, Phe-328–Val-348, Ser-356–Ala-376, Leu-384–Ile-404, Leu-428–Met-448, and Leu-450–Phe-470.

The protein belongs to the SecD/SecF family. SecD subfamily. In terms of assembly, part of the protein translocation apparatus. Forms a complex with SecF.

The protein resides in the cell membrane. Functionally, involved in protein export. The polypeptide is Protein-export membrane protein SecD (Methanolacinia petrolearia (strain DSM 11571 / OCM 486 / SEBR 4847) (Methanoplanus petrolearius)).